Reading from the N-terminus, the 304-residue chain is MITAKMVKELREITGAGMMDCKKALTETNGDTEKAVEVLREKGLAAAAKKSGRIAAEGLVETYIAEDKKNASIVEVNCETDFVAANEEFKGLVANIAKQAANTKAEDVDSFIEEKYIGSEEGTIKDAVTALVAKLGENMSVRRFKQLSVENGIIESYIHGDGKIGVLVELECEKESEVLSEVAKDVAMQVAAVNPPFLDRTFVDEETLDKEREIYRVQALNEGKPEKIVDKMVEGRIQKYYKENCLVEQVWVRNSDYTIDKYVKEKSKEVGADIKVANFVRFEKGEGIEKKEEDFAEEVKKQMQ.

The tract at residues 80–83 (TDFV) is involved in Mg(2+) ion dislocation from EF-Tu.

Belongs to the EF-Ts family.

It is found in the cytoplasm. Functionally, associates with the EF-Tu.GDP complex and induces the exchange of GDP to GTP. It remains bound to the aminoacyl-tRNA.EF-Tu.GTP complex up to the GTP hydrolysis stage on the ribosome. This is Elongation factor Ts from Clostridium tetani (strain Massachusetts / E88).